We begin with the raw amino-acid sequence, 566 residues long: 4-hydroxy-7-methoxy-3-oxo-3,4-dihydro-2H-1,4-benzoxazin-2-yl glucoside beta-D-glucosidase 1, chloroplastic (566 aa).

A chloroplast-targeting transit peptide spans 1-54 (MAPLLAAAMNHAAAHPGLRSHLVGPNNESFSRHHLPSSSPQSSKRRCNLSFTTR). A disordered region spans residues 17-47 (GLRSHLVGPNNESFSRHHLPSSSPQSSKRRC). A beta-D-glucoside-binding positions include Gln-92, His-196, and 244 to 245 (NE). Catalysis depends on Glu-245, which acts as the Proton donor. A disulfide bridge connects residues Cys-264 and Cys-270. The segment at 325-361 (SFLDKQAEERSWDINLGWFLEPVVRGDYPFSMRSLAR) is dimerization. Tyr-387 provides a ligand contact to a beta-D-glucoside. 2 dimerization regions span residues 394 to 405 (NIDISPNYSPVL) and 450 to 453 (KYGN). A beta-D-glucoside-binding positions include Glu-460, Trp-511, 518–519 (EW), and Tyr-527. The active-site Nucleophile is Glu-460.

Belongs to the glycosyl hydrolase 1 family. As to quaternary structure, homo- and heterodimer. As to expression, expressed in all seedling parts. Most abundant in the coleoptile.

Its subcellular location is the plastid. The protein localises to the chloroplast. The catalysed reaction is Hydrolysis of terminal, non-reducing beta-D-glucosyl residues with release of beta-D-glucose.. It carries out the reaction DIMBOA beta-D-glucoside + H2O = DIMBOA + D-glucose. The enzyme catalyses DIBOA beta-D-glucoside + H2O = DIBOA + D-glucose. With respect to regulation, reversibly inhibited by micromolar concentrations of Hg(2+) or Ag(+), but irreversibly inhibited by alkylation in presence of urea. Competitive inhibition by p-nitrophenyl beta-D-thioglucoside (pNPTGlc), glucotetrazole, and para-hydroxy-S-mandelonitrile beta-glucoside (dhurrin). Its function is as follows. Is implicated in many functions such as ABA metabolism, hydrolysis of conjugated gibberellins, conversion of storage forms of cytokinins to active forms. Also acts in defense of young plant parts against pests via the production of hydroxamic acids from hydroxamic acid glucosides. Enzymatic activity is highly correlated with plant growth. The preferred substrate is DIMBOA-beta-D-glucoside. Hydrolyzes the chromogenic substrate 6-bromo-2-naphthyl-beta-D-glucoside (6BNGlc) and various artificial aryl beta-glucosides. No activity with cellobiose, arbutin, gentiobiose, linamarin or dhurrin as substrates. The polypeptide is 4-hydroxy-7-methoxy-3-oxo-3,4-dihydro-2H-1,4-benzoxazin-2-yl glucoside beta-D-glucosidase 1, chloroplastic (GLU1) (Zea mays (Maize)).